A 424-amino-acid polypeptide reads, in one-letter code: Serine--tRNA ligase (424 aa).

Position 231-233 (231-233 (TAE)) interacts with L-serine. Residue 262–264 (RSE) coordinates ATP. Residue glutamate 285 participates in L-serine binding. Position 349–352 (349–352 (EISS)) interacts with ATP. Serine 385 lines the L-serine pocket.

This sequence belongs to the class-II aminoacyl-tRNA synthetase family. Type-1 seryl-tRNA synthetase subfamily. Homodimer. The tRNA molecule binds across the dimer.

Its subcellular location is the cytoplasm. It catalyses the reaction tRNA(Ser) + L-serine + ATP = L-seryl-tRNA(Ser) + AMP + diphosphate + H(+). The enzyme catalyses tRNA(Sec) + L-serine + ATP = L-seryl-tRNA(Sec) + AMP + diphosphate + H(+). The protein operates within aminoacyl-tRNA biosynthesis; selenocysteinyl-tRNA(Sec) biosynthesis; L-seryl-tRNA(Sec) from L-serine and tRNA(Sec): step 1/1. Catalyzes the attachment of serine to tRNA(Ser). Is also able to aminoacylate tRNA(Sec) with serine, to form the misacylated tRNA L-seryl-tRNA(Sec), which will be further converted into selenocysteinyl-tRNA(Sec). This Bacillus cereus (strain AH187) protein is Serine--tRNA ligase.